The chain runs to 293 residues: 4-hydroxy-tetrahydrodipicolinate synthase (293 aa).

Thr47 provides a ligand contact to pyruvate. The active-site Proton donor/acceptor is Tyr136. Residue Lys164 is the Schiff-base intermediate with substrate of the active site. Position 206 (Ile206) interacts with pyruvate.

It belongs to the DapA family. As to quaternary structure, homotetramer; dimer of dimers.

The protein resides in the cytoplasm. It catalyses the reaction L-aspartate 4-semialdehyde + pyruvate = (2S,4S)-4-hydroxy-2,3,4,5-tetrahydrodipicolinate + H2O + H(+). Its pathway is amino-acid biosynthesis; L-lysine biosynthesis via DAP pathway; (S)-tetrahydrodipicolinate from L-aspartate: step 3/4. Its function is as follows. Catalyzes the condensation of (S)-aspartate-beta-semialdehyde [(S)-ASA] and pyruvate to 4-hydroxy-tetrahydrodipicolinate (HTPA). The sequence is that of 4-hydroxy-tetrahydrodipicolinate synthase from Listeria monocytogenes serotype 4a (strain HCC23).